An 88-amino-acid polypeptide reads, in one-letter code: Synaptonemal complex central element protein 3 (88 aa).

A coiled-coil region spans residues 8 to 75 (ERSYDNMLKM…FLNCKEEMEK (68 aa)).

As to quaternary structure, homodimer. Can form higher-order homooligomers. Interacts with SYCP1 (via tetrameric core); the interaction remodels SYCP1 homotetramers to 2:1 heterotrimers with SYCE3. SYCP1/SYCE3 heterotrimers form lattice assemblies as part of the mature synaptonemal complex via both lateral and head-to-head interactions. Interacts with the SYCE1-SIX6OS1 complex; the interaction recruits the SYCE1-SIX6OS1 complex to the central element of the synaptonemal complex. Interacts with the SYCE2-TEX12 complex; the interaction promotes fibrous assembly of SYCE2-TEX12 as part of the synaptonemal complex central element. Interacts with SYCE1. Interacts with SYCE2. Interacts with proteasome subunit PSMA8; to participate in meiosis progression during spermatogenesis. Interacts with SPO16. Expression is restricted to spermatocytes and is absent in spermatogonia, spermatids and spermatogonia (at protein level). Expressed in adult testis and embryonic ovary. Expressed in the convoluted seminiferous tubules in spermatogonia and spermatocytes.

Its subcellular location is the nucleus. The protein localises to the chromosome. Its function is as follows. Major component of the transverse central element of synaptonemal complexes (SCS), formed between homologous chromosomes during meiotic prophase. Required for the assembly of the central element of the synaptonemal complex during meiosis, via remodeling of SYCP1 lattice structures and promoting recruitment of SYCE2-TEX12 and SYCE1-SIX60S1 complexes. Required for chromosome loading of the central element-specific SCS proteins, and for initiating synapsis between homologous chromosomes. Chromosome loading appears to require SYCP1. Required for fertility and normal testis development. May play a role in apoptosis of spermatogenic cells and pathogenesis of cryptorchidism. This is Synaptonemal complex central element protein 3 from Mus musculus (Mouse).